The primary structure comprises 265 residues: Synaptoporin (265 aa).

Residues 1 to 4 (MCMV) are Cytoplasmic-facing. An MARVEL domain is found at 1–202 (MCMVIFAPLF…NIWFVFKETG (202 aa)). Residues 5–25 (IFAPLFAIFAFATCGGYSGGL) form a helical membrane-spanning segment. Residues 26 to 81 (RLSVDCVNKTESNLSIDIAFAYPFRLHQVTFEVPTCEGKERQKLALIGDSSSSAEF) are Vesicular-facing. N-linked (GlcNAc...) asparagine glycosylation is found at Asn-33 and Asn-38. Residues 82-102 (FVTVAVFAFLYSLAATVVYIF) traverse the membrane as a helical segment. Residues 103-114 (FQNKYRENNRGP) lie on the Cytoplasmic side of the membrane. Residues 115-135 (LIDFIVTVVFSFLWLVGSSAW) traverse the membrane as a helical segment. Topologically, residues 136 to 177 (AKGLSDVKVATDPKEVLLLMSACKQPSNKCMAIHSPVMSSLN) are vesicular. The chain crosses the membrane as a helical span at residues 178–198 (TSVVFGFLNFILWAGNIWFVF). Over 199-265 (KETGWHSSGQ…TGPTSFTNQI (67 aa)) the chain is Cytoplasmic. A run of 5 repeats spans residues 210–214 (YLSDP), 222–226 (YNQGG), 227–231 (YNQDS), 232–236 (YGSSS), and 238–242 (YSQQA). Residues 210 to 242 (YLSDPMEKHSSSYNQGGYNQDSYGSSSGYSQQA) are 5 X approximate repeats. The residue at position 212 (Ser-212) is a Phosphoserine. The segment at 221 to 265 (SYNQGGYNQDSYGSSSGYSQQASLGPTSDEFGQQPTGPTSFTNQI) is disordered. Over residues 224-243 (QGGYNQDSYGSSSGYSQQAS) the composition is skewed to low complexity. Polar residues predominate over residues 244 to 265 (LGPTSDEFGQQPTGPTSFTNQI).

Belongs to the synaptophysin/synaptobrevin family.

It is found in the cytoplasmic vesicle. Its subcellular location is the secretory vesicle. The protein resides in the synaptic vesicle membrane. It localises to the synapse. The protein localises to the synaptosome. Intrinsic membrane protein of small synaptic vesicles. Probable vesicular channel protein. In Homo sapiens (Human), this protein is Synaptoporin (SYNPR).